Here is a 309-residue protein sequence, read N- to C-terminus: Taste receptor type 2 member 114 (309 aa).

The Extracellular portion of the chain corresponds to methionine 1 to glycine 7. A helical membrane pass occupies residues valine 8–alanine 28. Topologically, residues leucine 29 to asparagine 43 are cytoplasmic. The chain crosses the membrane as a helical span at residues isoleucine 44 to threonine 64. The Extracellular portion of the chain corresponds to glutamate 65–tyrosine 87. The chain crosses the membrane as a helical span at residues leucine 88–phenylalanine 108. Residues leucine 109–asparagine 127 lie on the Cytoplasmic side of the membrane. The helical transmembrane segment at isoleucine 128 to valine 148 threads the bilayer. Topologically, residues valine 149–glycine 182 are extracellular. N-linked (GlcNAc...) asparagine glycosylation is present at asparagine 161. The chain crosses the membrane as a helical span at residues glycine 183 to tryptophan 203. Over arginine 204–serine 233 the chain is Cytoplasmic. The chain crosses the membrane as a helical span at residues phenylalanine 234–valine 254. The Extracellular portion of the chain corresponds to proline 255–leucine 259. The helical transmembrane segment at leucine 260–isoleucine 280 threads the bilayer. Topologically, residues leucine 281–threonine 309 are cytoplasmic.

It belongs to the G-protein coupled receptor T2R family.

It localises to the membrane. In terms of biological role, putative taste receptor which may play a role in the perception of bitterness. The chain is Taste receptor type 2 member 114 from Rattus norvegicus (Rat).